We begin with the raw amino-acid sequence, 235 residues long: uncharacterized protein (235 aa).

To E.coli YbeR.

This is an uncharacterized protein from Escherichia coli (strain K12).